Reading from the N-terminus, the 227-residue chain is Charged multivesicular body protein 4c (227 aa).

Residues 1–27 (MSKITKLFKSSGGSGSSSKNRKGPSAQ) form a disordered region. Coiled-coil stretches lie at residues 32–94 (KLRE…STIE) and 129–187 (LEKI…MANV). Positions 178–227 (EDLNSQMANVNLPSVPSSKLPSTKLPSRPASSRKKVEDDDDMQMLAAWAT) are disordered. The segment covering 189–206 (LPSVPSSKLPSTKLPSRP) has biased composition (low complexity).

It belongs to the SNF7 family. As to quaternary structure, probable core component of the endosomal sorting required for transport complex III (ESCRT-III). ESCRT-III components are thought to multimerize to form a flat lattice on the perimeter membrane of the endosome.

It localises to the cytoplasm. It is found in the cytosol. The protein localises to the late endosome membrane. In terms of biological role, probable core component of the endosomal sorting required for transport complex III (ESCRT-III) which is involved in multivesicular bodies (MVBs) formation and sorting of endosomal cargo proteins into MVBs. MVBs contain intraluminal vesicles (ILVs) that are generated by invagination and scission from the limiting membrane of the endosome and mostly are delivered to lysosomes enabling degradation of membrane proteins, such as stimulated growth factor receptors, lysosomal enzymes and lipids. Key component of the cytokinesis checkpoint, a process required to delay abscission to prevent both premature resolution of intercellular chromosome bridges and accumulation of DNA damage. The polypeptide is Charged multivesicular body protein 4c (chmp4c) (Xenopus laevis (African clawed frog)).